Consider the following 561-residue polypeptide: Putative transport protein Ent638_1362 (561 aa).

The next 5 membrane-spanning stretches (helical) occupy residues 8-28, 32-52, 66-86, 94-114, and 158-178; these read LLNGNYILLLFVVLALGLCLG, LGSVQLGNSIGVLVVSLLLGQ, FMLFIFCVGVEAGPNFFSIFF, MLALVMVGSALIIALGLGKLF, and HLSLGYALTYLIGLVSLIVAA. RCK C-terminal domains are found at residues 202–288 and 292–373; these read LDTD…SFRN and VFDR…RIGF. 5 helical membrane passes run 383 to 403, 406 to 426, 447 to 467, 475 to 495, and 540 to 560; these read LLAFCAFFIVGLMIGMITFQF, FSFGVGNAAGLLFAGIMLGFL, FGLMVFMAGVGLSAGSGIGHS, MLVAGLIVSLLPVVICFLFGA, and AIANVLLTLAGTLIIIIWPGL.

The protein belongs to the AAE transporter (TC 2.A.81) family. YbjL subfamily.

The protein localises to the cell membrane. This is Putative transport protein Ent638_1362 from Enterobacter sp. (strain 638).